A 78-amino-acid polypeptide reads, in one-letter code: D-alanyl carrier protein (78 aa).

A Carrier domain is found at 1–78; sequence MAFRENVLEI…MIITQLEALK (78 aa). An O-(pantetheine 4'-phosphoryl)serine modification is found at S36.

The protein belongs to the DltC family. Post-translationally, 4'-phosphopantetheine is transferred from CoA to a specific serine of apo-DCP.

The protein localises to the cytoplasm. It participates in cell wall biogenesis; lipoteichoic acid biosynthesis. Carrier protein involved in the D-alanylation of lipoteichoic acid (LTA). The loading of thioester-linked D-alanine onto DltC is catalyzed by D-alanine--D-alanyl carrier protein ligase DltA. The DltC-carried D-alanyl group is further transferred to cell membrane phosphatidylglycerol (PG) by forming an ester bond, probably catalyzed by DltD. D-alanylation of LTA plays an important role in modulating the properties of the cell wall in Gram-positive bacteria, influencing the net charge of the cell wall. This chain is D-alanyl carrier protein, found in Listeria welshimeri serovar 6b (strain ATCC 35897 / DSM 20650 / CCUG 15529 / CIP 8149 / NCTC 11857 / SLCC 5334 / V8).